We begin with the raw amino-acid sequence, 276 residues long: Dermonecrotic toxin LsaSicTox-alphaIB2iii (276 aa).

The active site involves His-5. Positions 25 and 27 each coordinate Mg(2+). The active-site Nucleophile is the His-41. 2 disulfide bridges follow: Cys-45–Cys-51 and Cys-47–Cys-190. Asp-85 lines the Mg(2+) pocket. Residues Asn-129 and Asn-253 are each glycosylated (N-linked (GlcNAc...) asparagine).

Belongs to the arthropod phospholipase D family. Class II subfamily. It depends on Mg(2+) as a cofactor. As to expression, expressed by the venom gland.

It localises to the secreted. It carries out the reaction an N-(acyl)-sphingosylphosphocholine = an N-(acyl)-sphingosyl-1,3-cyclic phosphate + choline. The catalysed reaction is an N-(acyl)-sphingosylphosphoethanolamine = an N-(acyl)-sphingosyl-1,3-cyclic phosphate + ethanolamine. The enzyme catalyses a 1-acyl-sn-glycero-3-phosphocholine = a 1-acyl-sn-glycero-2,3-cyclic phosphate + choline. It catalyses the reaction a 1-acyl-sn-glycero-3-phosphoethanolamine = a 1-acyl-sn-glycero-2,3-cyclic phosphate + ethanolamine. In terms of biological role, dermonecrotic toxins cleave the phosphodiester linkage between the phosphate and headgroup of certain phospholipids (sphingolipid and lysolipid substrates), forming an alcohol (often choline) and a cyclic phosphate. This toxin acts on sphingomyelin (SM). It may also act on ceramide phosphoethanolamine (CPE), lysophosphatidylcholine (LPC) and lysophosphatidylethanolamine (LPE), but not on lysophosphatidylserine (LPS), and lysophosphatidylglycerol (LPG). It acts by transphosphatidylation, releasing exclusively cyclic phosphate products as second products. Induces dermonecrosis, hemolysis, increased vascular permeability, edema, inflammatory response, and platelet aggregation. This chain is Dermonecrotic toxin LsaSicTox-alphaIB2iii, found in Loxosceles sabina (Tucson recluse spider).